The following is a 248-amino-acid chain: MADS-box transcription factor 8 (248 aa).

Residues 1 to 61 (MGRGRVELKR…GKLYEFCSGQ (61 aa)) form the MADS-box domain. Positions 90–180 (VQSSRNEYLK…RRKLEESNQL (91 aa)) constitute a K-box domain.

In terms of assembly, may interact with the K-box of MADS6 and MADS16. May interact with MADS13 and MADS18. Binds to FCA. Expressed in lodicules, stamens and carpels.

Its subcellular location is the nucleus. Probable transcription factor. May be involved in the control of flowering time. This Oryza sativa subsp. japonica (Rice) protein is MADS-box transcription factor 8 (MADS8).